The sequence spans 297 residues: 4-diphosphocytidyl-2-C-methyl-D-erythritol kinase (297 aa).

The active site involves K14. 99 to 109 lines the ATP pocket; it reads PVAAGIGGGSA. The active site involves D141.

This sequence belongs to the GHMP kinase family. IspE subfamily.

It catalyses the reaction 4-CDP-2-C-methyl-D-erythritol + ATP = 4-CDP-2-C-methyl-D-erythritol 2-phosphate + ADP + H(+). It participates in isoprenoid biosynthesis; isopentenyl diphosphate biosynthesis via DXP pathway; isopentenyl diphosphate from 1-deoxy-D-xylulose 5-phosphate: step 3/6. Catalyzes the phosphorylation of the position 2 hydroxy group of 4-diphosphocytidyl-2C-methyl-D-erythritol. The chain is 4-diphosphocytidyl-2-C-methyl-D-erythritol kinase from Bradyrhizobium diazoefficiens (strain JCM 10833 / BCRC 13528 / IAM 13628 / NBRC 14792 / USDA 110).